A 196-amino-acid chain; its full sequence is Cilia- and flagella-associated protein 107 (196 aa).

2 mn regions span residues Thr47–His62 and Ile97–Tyr109.

As to quaternary structure, microtubule inner protein component of sperm flagellar doublet microtubules.

Its subcellular location is the cytoplasm. The protein localises to the cytoskeleton. It is found in the cilium axoneme. It localises to the flagellum axoneme. Functionally, microtubule inner protein (MIP) part of the dynein-decorated doublet microtubules (DMTs) in cilia axoneme, which is required for motile cilia beating. This Mus musculus (Mouse) protein is Cilia- and flagella-associated protein 107.